A 424-amino-acid chain; its full sequence is Interleukin-13 receptor subunit alpha-1 (424 aa).

Residues 1–25 form the signal peptide; sequence MARPALLGELLVLLLWTATVGQVAA. The Extracellular portion of the chain corresponds to 26–340; it reads ATEVQPPVTN…QSIGKEQNST (315 aa). The 90-residue stretch at 32–121 folds into the Fibronectin type-III 1 domain; sequence PVTNLSVSVE…VKKCISPPEG (90 aa). Residues N35, N59, N103, and N136 are each glycosylated (N-linked (GlcNAc...) asparagine). The cysteines at positions 44 and 93 are disulfide-linked. 2 disulfides stabilise this stretch: C132–C142 and C171–C183. The 113-residue stretch at 224-336 folds into the Fibronectin type-III 2 domain; that stretch reads KPDPPHIKHL…WSEAQSIGKE (113 aa). N-linked (GlcNAc...) asparagine glycosylation occurs at N262. Positions 324 to 328 match the WSXWS motif motif; it reads WSDWS. N338 carries N-linked (GlcNAc...) asparagine glycosylation. Residues 341–364 form a helical membrane-spanning segment; it reads FYTTMLLTIPVFVAVAVIILLFYL. Over 365–424 the chain is Cytoplasmic; the sequence is KRLKIIIFPPIPDPGKIFKEMFGDQNDDTLHWKKYDIYEKQSKEETDSVVLIENLKKAAP. Residues 371 to 379 carry the Box 1 motif motif; that stretch reads IFPPIPDPG.

Belongs to the type I cytokine receptor family. Type 5 subfamily. As to quaternary structure, interleukin-13 receptor is a complex of IL4R, IL13RA1, and possibly other components. Interacts with TRAF3IP1. Interacts with IL4. In terms of tissue distribution, spleen, liver, thymus, heart, lung, kidney, testis, stomach, brain, skin, and colon; but not skeletal muscle.

The protein localises to the membrane. Its function is as follows. Binds with low affinity to interleukin-13 (IL13). Together with IL4RA can form a functional receptor for IL13. Also serves as an alternate accessory protein to the common cytokine receptor gamma chain for interleukin-4 (IL4) signaling, but cannot replace the function of IL2RG in allowing enhanced interleukin-2 (IL2) binding activity. The sequence is that of Interleukin-13 receptor subunit alpha-1 (Il13ra1) from Mus musculus (Mouse).